Here is a 242-residue protein sequence, read N- to C-terminus: Probable transcriptional regulatory protein XOO1543 (242 aa).

It belongs to the TACO1 family.

The protein resides in the cytoplasm. This chain is Probable transcriptional regulatory protein XOO1543, found in Xanthomonas oryzae pv. oryzae (strain MAFF 311018).